We begin with the raw amino-acid sequence, 124 residues long: Sulfiredoxin (124 aa).

It belongs to the sulfiredoxin family. Interacts with tpx1 in response to oxidative stress.

It localises to the cytoplasm. The protein localises to the nucleus. It catalyses the reaction S-hydroxy-S-oxy-L-cysteinyl-[peroxiredoxin] + [protein]-dithiol + ATP = S-hydroxy-L-cysteinyl-[peroxiredoxin] + [protein]-disulfide + ADP + phosphate. Functionally, contributes to oxidative stress resistance by reducing cysteine-sulfinic acid formed under exposure to oxidants in a peroxiredoxin. May catalyze the reduction in a multi-step process by acting both as a specific phosphotransferase and a thioltransferase. The sequence is that of Sulfiredoxin (srx1) from Schizosaccharomyces pombe (strain 972 / ATCC 24843) (Fission yeast).